The sequence spans 541 residues: Membrane protein insertase YidC (541 aa).

A helical transmembrane segment spans residues 7-27 (ILLLALALVSFLLFQQWQVET). Over residues 34–55 (TVSTVQQTHKNGDVPTSSTANS) the composition is skewed to polar residues. The tract at residues 34-59 (TVSTVQQTHKNGDVPTSSTANSDAPV) is disordered. Transmembrane regions (helical) follow at residues 343 to 363 (SFIQ…TFIV), 418 to 438 (LGGC…YWAL), 456 to 476 (LSAQ…MFLI), and 495 to 515 (FIPV…VLYW).

Belongs to the OXA1/ALB3/YidC family. Type 1 subfamily. In terms of assembly, interacts with the Sec translocase complex via SecD. Specifically interacts with transmembrane segments of nascent integral membrane proteins during membrane integration.

It localises to the cell inner membrane. In terms of biological role, required for the insertion and/or proper folding and/or complex formation of integral membrane proteins into the membrane. Involved in integration of membrane proteins that insert both dependently and independently of the Sec translocase complex, as well as at least some lipoproteins. Aids folding of multispanning membrane proteins. The sequence is that of Membrane protein insertase YidC from Aliivibrio salmonicida (strain LFI1238) (Vibrio salmonicida (strain LFI1238)).